The following is a 637-amino-acid chain: Zinc-transporting ATPase (637 aa).

The next 4 helical transmembrane spans lie at 43–63, 89–109, 258–278, and 286–306; these read GWLL…AFVI, IFAA…ILIF, GVLI…GWSW, and MVFM…PAAL. Catalysis depends on Asp337, which acts as the 4-aspartylphosphate intermediate. Mg(2+) contacts are provided by Asp535 and Asp539. The helical transmembrane segment at 599–619 threads the bilayer; the sequence is VICLLICANFLQAMELPFGVI.

The protein belongs to the cation transport ATPase (P-type) (TC 3.A.3) family. Type IB subfamily.

The protein localises to the cell membrane. It catalyses the reaction Zn(2+)(out) + ATP(in) + H2O(in) = Zn(2+)(in) + ADP(in) + phosphate(in) + H(+)(in). Functionally, couples the hydrolysis of ATP with the transport of zinc into the cell. Plays an important role in protecting cells against oxidative stress. ZosA-mediated zinc transport is required for post-transcriptional control of comK and competence development. The protein is Zinc-transporting ATPase (zosA) of Bacillus subtilis (strain 168).